Here is a 305-residue protein sequence, read N- to C-terminus: Leucine-rich repeat-containing protein 25 (305 aa).

The signal sequence occupies residues 1-20 (MGGTLAWTLLLPLLLRESDS). Over 21-165 (LEPSCTVSSA…SCAPGLASAT (145 aa)) the chain is Extracellular. 3 LRR repeats span residues 39-59 (SATC…QSLR), 62-83 (NVIL…FFAH), and 86-107 (KLEV…LAAR). Asn-44 and Asn-55 each carry an N-linked (GlcNAc...) asparagine glycan. Residues Asn-130 and Asn-148 are each glycosylated (N-linked (GlcNAc...) asparagine). A helical membrane pass occupies residues 166–186 (IGAVVVSGCLLLGLAIAGPVL). Topologically, residues 187-305 (AWRLWRCRVA…DEEEYVIPGH (119 aa)) are cytoplasmic. The tract at residues 204–229 (PWAAQDGPKPGLGLQPRYGSRSAPKP) is disordered. Tyr-284 bears the Phosphotyrosine mark.

As to quaternary structure, interacts with RIGI. Interacts with SQSTM1. Interacts with p65/RELA; this interaction promotes the degradation of RELA through autophagy. As to expression, expressed in plasmacytoid dendritic cells (PDC), monocyte-derived dendritic cells (MDDC), granulocytes, monocytes, B-lymphocytes, peripheral blood leukocytes, spleen, bone marrow, and, to a lesser extent, lymph nodes, fetal liver, and appendix but not in thymus.

It is found in the membrane. It localises to the cytoplasm. Functionally, plays a role in the inhibition of RLR-mediated type I interferon signaling pathway by targeting RIGI for autophagic degradation. Interacts specifically with ISG15-associated RIGI to promote interaction between RIGI and the autophagic cargo receptor p62/SQSTM1 to mediate RIGI degradation via selective autophagy. Also plays a role in the inhibition of NF-kappa-B signaling pathway and inflammatory response by promoting the degradation of p65/RELA. The sequence is that of Leucine-rich repeat-containing protein 25 (LRRC25) from Homo sapiens (Human).